The sequence spans 285 residues: Inhibitor of growth protein 5 (285 aa).

Residues 116–225 (EKASSTRAKS…ATHPSDVMDM (110 aa)) are disordered. Basic residues predominate over residues 131 to 149 (KKGRKKTKDSKTTGKKKKS). Over residues 160 to 178 (NNQSNANSSVNSSSNAGQG) the composition is skewed to low complexity. The PHD-type zinc finger occupies 232–281 (PTYCLCHQVSYGEMIGCDNPDCPIEWFHFACVGLTTKPKGKWFCPKCTQD). Zn(2+)-binding residues include C235, C237, C248, C253, H259, C262, C275, and C278.

Belongs to the ING family. Component of the Enok complex composed of at least Br140, enok, Eaf6 and Ing5.

Its subcellular location is the nucleus. It localises to the chromosome. In terms of biological role, component of the Enok complex which has a histone H3 acetyltransferase activity. The sequence is that of Inhibitor of growth protein 5 from Drosophila melanogaster (Fruit fly).